The chain runs to 132 residues: Large-conductance mechanosensitive channel (132 aa).

The next 3 helical transmembrane spans lie at 14-34, 38-58, and 67-87; these read VVDL…VSSL, IITP…LHFG, and GNFI…FMFV.

This sequence belongs to the MscL family. As to quaternary structure, homopentamer.

The protein localises to the cell membrane. Its function is as follows. Channel that opens in response to stretch forces in the membrane lipid bilayer. May participate in the regulation of osmotic pressure changes within the cell. This is Large-conductance mechanosensitive channel from Bacillus cereus (strain B4264).